Reading from the N-terminus, the 410-residue chain is Pyruvate dehydrogenase complex protein X component, mitochondrial (410 aa).

A mitochondrion-targeting transit peptide spans M1 to L30. One can recognise a Lipoyl-binding domain in the interval V32 to A108. An N6-lipoyllysine modification is found at K73. Residues T169–L210 enclose the Peripheral subunit-binding (PSBD) domain.

It belongs to the 2-oxoacid dehydrogenase family. As to quaternary structure, eukaryotic pyruvate dehydrogenase (PDH) complexes are organized as a core consisting of the oligomeric dihydrolipoamide acetyl-transferase (E2), around which are arranged multiple copies of pyruvate dehydrogenase (E1), dihydrolipoamide dehydrogenase (E3) and protein X (E3BP) bound by non-covalent bonds.

It localises to the mitochondrion matrix. Required for anchoring dihydrolipoamide dehydrogenase (E3) to the dihydrolipoamide transacetylase (E2) core of the pyruvate dehydrogenase complexes of eukaryotes. This specific binding is essential for a functional PDH complex. The polypeptide is Pyruvate dehydrogenase complex protein X component, mitochondrial (PDX1) (Saccharomyces cerevisiae (strain ATCC 204508 / S288c) (Baker's yeast)).